We begin with the raw amino-acid sequence, 355 residues long: Eukaryotic initiation factor 4A-13 (355 aa).

Positions 40–68 (DSFDAMGLQENLLRGIYAYGFEKPSAIQQ) match the Q motif motif. The region spanning 71–241 (IVPFCKGLDV…RKFMNQPVRI (171 aa)) is the Helicase ATP-binding domain. An ATP-binding site is contributed by 84-91 (AQSGTGKT). Positions 189–192 (DEAD) match the DEAD box motif. In terms of domain architecture, Helicase C-terminal spans 252–355 (GIKQFYVNVD…QQVSLVINYD (104 aa)).

This sequence belongs to the DEAD box helicase family. eIF4A subfamily. EIF4F is a multi-subunit complex, the composition of which varies with external and internal environmental conditions. It is composed of at least EIF4A, EIF4E and EIF4G.

It carries out the reaction ATP + H2O = ADP + phosphate + H(+). ATP-dependent RNA helicase which is a subunit of the eIF4F complex involved in cap recognition and is required for mRNA binding to ribosome. In the current model of translation initiation, eIF4A unwinds RNA secondary structures in the 5'-UTR of mRNAs which is necessary to allow efficient binding of the small ribosomal subunit, and subsequent scanning for the initiator codon. This Nicotiana tabacum (Common tobacco) protein is Eukaryotic initiation factor 4A-13.